We begin with the raw amino-acid sequence, 281 residues long: 4-diphosphocytidyl-2-C-methyl-D-erythritol kinase (281 aa).

Residue Lys15 is part of the active site. Pro98–Ser108 serves as a coordination point for ATP. The active site involves Asp140.

Belongs to the GHMP kinase family. IspE subfamily.

It carries out the reaction 4-CDP-2-C-methyl-D-erythritol + ATP = 4-CDP-2-C-methyl-D-erythritol 2-phosphate + ADP + H(+). It participates in isoprenoid biosynthesis; isopentenyl diphosphate biosynthesis via DXP pathway; isopentenyl diphosphate from 1-deoxy-D-xylulose 5-phosphate: step 3/6. In terms of biological role, catalyzes the phosphorylation of the position 2 hydroxy group of 4-diphosphocytidyl-2C-methyl-D-erythritol. The protein is 4-diphosphocytidyl-2-C-methyl-D-erythritol kinase of Neisseria meningitidis serogroup C (strain 053442).